A 311-amino-acid polypeptide reads, in one-letter code: GTPase Era (311 aa).

One can recognise an Era-type G domain in the interval 18-185 (RSGFVALIGA…AKYLAESVPN (168 aa)). Positions 26–33 (GAPNAGKS) are G1. 26–33 (GAPNAGKS) serves as a coordination point for GTP. Positions 52-56 (QTTRA) are G2. Positions 73 to 76 (DTPG) are G3. GTP is bound by residues 73-77 (DTPGI) and 135-138 (NKVD). The G4 stretch occupies residues 135–138 (NKVD). A G5 region spans residues 164-166 (ISA). Residues 216 to 293 (LHEELPYAST…HQFLFVKVRE (78 aa)) enclose the KH type-2 domain.

The protein belongs to the TRAFAC class TrmE-Era-EngA-EngB-Septin-like GTPase superfamily. Era GTPase family. Monomer.

The protein localises to the cytoplasm. Its subcellular location is the cell inner membrane. Its function is as follows. An essential GTPase that binds both GDP and GTP, with rapid nucleotide exchange. Plays a role in 16S rRNA processing and 30S ribosomal subunit biogenesis and possibly also in cell cycle regulation and energy metabolism. In Brucella melitensis biotype 1 (strain ATCC 23456 / CCUG 17765 / NCTC 10094 / 16M), this protein is GTPase Era.